The following is a 155-amino-acid chain: Cytochrome c-type biogenesis protein CcmE (155 aa).

At 1 to 8 (MNPRRKKR) the chain is on the cytoplasmic side. Residues 9-29 (LLITSLLAVALSLAVGLVLFA) traverse the membrane as a helical; Signal-anchor for type II membrane protein segment. At 30–155 (LQQNIDLFYT…GMDNFKANNK (126 aa)) the chain is on the periplasmic side. Heme-binding residues include His131 and Tyr135.

Belongs to the CcmE/CycJ family.

The protein resides in the cell inner membrane. In terms of biological role, heme chaperone required for the biogenesis of c-type cytochromes. Transiently binds heme delivered by CcmC and transfers the heme to apo-cytochromes in a process facilitated by CcmF and CcmH. The polypeptide is Cytochrome c-type biogenesis protein CcmE (Psychromonas ingrahamii (strain DSM 17664 / CCUG 51855 / 37)).